A 546-amino-acid chain; its full sequence is Probable acyl-activating enzyme 21 (546 aa).

Belongs to the ATP-dependent AMP-binding enzyme family.

Functionally, may act as an acid--thiol ligase that activates carboxylic acids by forming acyl-CoAs. The polypeptide is Probable acyl-activating enzyme 21 (AEE21) (Arabidopsis thaliana (Mouse-ear cress)).